A 154-amino-acid polypeptide reads, in one-letter code: Lipoprotein signal peptidase (154 aa).

A run of 2 helical transmembrane segments spans residues 55–75 and 84–104; these read GHMW…IYIM and LFSI…IDRI. Active-site residues include aspartate 111 and aspartate 129. The chain crosses the membrane as a helical span at residues 124–144; that stretch reads IFNVADAALSVGVVLMLVYVF.

Belongs to the peptidase A8 family.

The protein resides in the cell membrane. It carries out the reaction Release of signal peptides from bacterial membrane prolipoproteins. Hydrolyzes -Xaa-Yaa-Zaa-|-(S,diacylglyceryl)Cys-, in which Xaa is hydrophobic (preferably Leu), and Yaa (Ala or Ser) and Zaa (Gly or Ala) have small, neutral side chains.. It participates in protein modification; lipoprotein biosynthesis (signal peptide cleavage). Functionally, this protein specifically catalyzes the removal of signal peptides from prolipoproteins. This chain is Lipoprotein signal peptidase, found in Listeria innocua serovar 6a (strain ATCC BAA-680 / CLIP 11262).